A 229-amino-acid chain; its full sequence is Complex I assembly factor TMEM126B, mitochondrial (229 aa).

Transmembrane regions (helical) follow at residues 71–91, 109–129, 140–160, and 198–218; these read IRGT…ANLV, LTTL…TDAL, VLRS…ALAF, and VPLL…YAVC.

As to quaternary structure, part of the mitochondrial complex I assembly/MCIA complex that comprises at least the core subunits TMEM126B, NDUFAF1, ECSIT and ACAD9 and complement subunits such as COA1 and TMEM186. Associates with the intermediate 370 kDa subcomplex of incompletely assembled complex I. Interacts with TMEM70.

The protein resides in the mitochondrion membrane. Functionally, as part of the MCIA complex, involved in the assembly of the mitochondrial complex I. Participates in constructing the membrane arm of complex I. This Rattus norvegicus (Rat) protein is Complex I assembly factor TMEM126B, mitochondrial.